Reading from the N-terminus, the 188-residue chain is UPF0301 protein XF_2228 (188 aa).

The protein belongs to the UPF0301 (AlgH) family.

This chain is UPF0301 protein XF_2228, found in Xylella fastidiosa (strain 9a5c).